Here is a 170-residue protein sequence, read N- to C-terminus: N-alpha-acetyltransferase 50 (170 aa).

Positions 6-155 (IELGDVTPHN…DAHVLQKNLK (150 aa)) constitute an N-acetyltransferase domain. Position 31 (tyrosine 31) interacts with substrate. Tyrosine 73 is an active-site residue. Substrate is bound at residue methionine 75. Residue 77–90 (LGCLAPYRRLGIGT) coordinates acetyl-CoA. 79–90 (CLAPYRRLGIGT) contributes to the CoA binding site. Residue histidine 112 is part of the active site. 117–126 (NESAIDFYRK) contributes to the CoA binding site. The tract at residues 138–141 (YYKR) is substrate.

The protein belongs to the acetyltransferase family. GNAT subfamily.

The protein localises to the cytoplasm. It is found in the nucleus. It carries out the reaction N-terminal L-methionyl-L-alanyl-[protein] + acetyl-CoA = N-terminal N(alpha)-acetyl-L-methionyl-L-alanyl-[protein] + CoA + H(+). The enzyme catalyses N-terminal L-methionyl-L-seryl-[protein] + acetyl-CoA = N-terminal N(alpha)-acetyl-L-methionyl-L-seryl-[protein] + CoA + H(+). The catalysed reaction is N-terminal L-methionyl-L-valyl-[protein] + acetyl-CoA = N-terminal N(alpha)-acetyl-L-methionyl-L-valyl-[protein] + CoA + H(+). It catalyses the reaction N-terminal L-methionyl-L-threonyl-[protein] + acetyl-CoA = N-terminal N(alpha)-acetyl-L-methionyl-L-threonyl-[protein] + CoA + H(+). It carries out the reaction N-terminal L-methionyl-L-lysyl-[protein] + acetyl-CoA = N-terminal N(alpha)-acetyl-L-methionyl-L-lysyl-[protein] + CoA + H(+). The enzyme catalyses N-terminal L-methionyl-L-leucyl-[protein] + acetyl-CoA = N-terminal N(alpha)-acetyl-L-methionyl-L-leucyl-[protein] + CoA + H(+). The catalysed reaction is N-terminal L-methionyl-L-phenylalanyl-[protein] + acetyl-CoA = N-terminal N(alpha)-acetyl-L-methionyl-L-phenylalanyl-[protein] + CoA + H(+). It catalyses the reaction N-terminal L-methionyl-L-tyrosyl-[protein] + acetyl-CoA = N-terminal N(alpha)-acetyl-L-methionyl-L-tyrosyl-[protein] + CoA + H(+). Functionally, N-alpha-acetyltransferase that acetylates the N-terminus of proteins that retain their initiating methionine. Has a broad substrate specificity: able to acetylate the initiator methionine of most peptides, except for those with a proline in second position. Also displays N-epsilon-acetyltransferase activity by mediating acetylation of the side chain of specific lysines on proteins. The relevance of N-epsilon-acetyltransferase activity is however unclear. Required for sister chromatid cohesion during mitosis by promoting binding of CDCA5/sororin to cohesin. In Xenopus laevis (African clawed frog), this protein is N-alpha-acetyltransferase 50 (naa50).